The following is a 327-amino-acid chain: Mitochondrial carnitine carrier (327 aa).

The segment covering 1–11 (MSSDTSLSESS) has biased composition (low complexity). The disordered stretch occupies residues 1-29 (MSSDTSLSESSLLKEESGSLTKSRPPIKS). 6 helical membrane-spanning segments follow: residues 33-49 (RENI…GVCA), 107-123 (LGVT…YDVG), 141-162 (MGQM…TAPT), 196-212 (GSLA…ALYF), 244-260 (LAGG…VFPI), and 293-313 (FFPG…ATFL). Solcar repeat units follow at residues 33-126 (RENI…GKKL), 139-221 (LTMG…SKNY), and 237-321 (VNIL…THSL).

This sequence belongs to the mitochondrial carrier (TC 2.A.29) family.

It is found in the mitochondrion inner membrane. Transports carnitine, acetylcarnitine, propionylcarnitine and to a much lower extent medium- and long-chain acylcarnitines. In Saccharomyces cerevisiae (strain ATCC 204508 / S288c) (Baker's yeast), this protein is Mitochondrial carnitine carrier (CRC1).